We begin with the raw amino-acid sequence, 446 residues long: Histidine--tRNA ligase (446 aa).

Belongs to the class-II aminoacyl-tRNA synthetase family. As to quaternary structure, homodimer.

Its subcellular location is the cytoplasm. It carries out the reaction tRNA(His) + L-histidine + ATP = L-histidyl-tRNA(His) + AMP + diphosphate + H(+). The sequence is that of Histidine--tRNA ligase from Burkholderia vietnamiensis (strain G4 / LMG 22486) (Burkholderia cepacia (strain R1808)).